The following is a 152-amino-acid chain: UPF0178 protein YaiI (152 aa).

This sequence belongs to the UPF0178 family.

This is UPF0178 protein YaiI from Escherichia coli O81 (strain ED1a).